The sequence spans 196 residues: Proteasome subunit beta 1 (196 aa).

A propeptide spans 1-6 (removed in mature form; by autocatalysis); that stretch reads MEELPA. Thr-7 (nucleophile) is an active-site residue.

The protein belongs to the peptidase T1B family. As to quaternary structure, the 20S proteasome core is composed of 14 alpha and 14 beta subunits that assemble into four stacked heptameric rings, resulting in a barrel-shaped structure. The two inner rings, each composed of seven catalytic beta subunits, are sandwiched by two outer rings, each composed of seven alpha subunits. The catalytic chamber with the active sites is on the inside of the barrel. Has a gated structure, the ends of the cylinder being occluded by the N-termini of the alpha-subunits. Is capped at one or both ends by the proteasome regulatory ATPase, PAN.

It localises to the cytoplasm. The enzyme catalyses Cleavage of peptide bonds with very broad specificity.. With respect to regulation, the formation of the proteasomal ATPase PAN-20S proteasome complex, via the docking of the C-termini of PAN into the intersubunit pockets in the alpha-rings, triggers opening of the gate for substrate entry. Interconversion between the open-gate and close-gate conformations leads to a dynamic regulation of the 20S proteasome proteolysis activity. Its function is as follows. Component of the proteasome core, a large protease complex with broad specificity involved in protein degradation. In Saccharolobus islandicus (strain Y.N.15.51 / Yellowstone #2) (Sulfolobus islandicus), this protein is Proteasome subunit beta 1.